The chain runs to 235 residues: Transcriptional regulatory protein MalR (235 aa).

The Response regulatory domain occupies 3–119 (NVLIVEDDPM…RFQTALSDYR (117 aa)). Position 54 is a 4-aspartylphosphate (Asp-54). A DNA-binding region (H-T-H motif) is located at residues 178–197 (TEDLAKHTEISQVSIRKYLK).

In terms of processing, phosphorylated and activated by MalK.

It localises to the cytoplasm. Its function is as follows. Member of a two-component regulatory system MalK/MalR. Activates transcription of maeA, maeN and yflS in presence of malate by binding to their promoter region. The chain is Transcriptional regulatory protein MalR (malR) from Bacillus subtilis (strain 168).